A 185-amino-acid chain; its full sequence is Large ribosomal subunit protein uL5 (185 aa).

This sequence belongs to the universal ribosomal protein uL5 family. As to quaternary structure, part of the 50S ribosomal subunit; part of the 5S rRNA/L5/L18/L25 subcomplex. Contacts the 5S rRNA and the P site tRNA. Forms a bridge to the 30S subunit in the 70S ribosome.

Its function is as follows. This is one of the proteins that bind and probably mediate the attachment of the 5S RNA into the large ribosomal subunit, where it forms part of the central protuberance. In the 70S ribosome it contacts protein S13 of the 30S subunit (bridge B1b), connecting the 2 subunits; this bridge is implicated in subunit movement. Contacts the P site tRNA; the 5S rRNA and some of its associated proteins might help stabilize positioning of ribosome-bound tRNAs. This Bartonella quintana (strain Toulouse) (Rochalimaea quintana) protein is Large ribosomal subunit protein uL5.